A 213-amino-acid chain; its full sequence is Thiamine-phosphate synthase (213 aa).

4-amino-2-methyl-5-(diphosphooxymethyl)pyrimidine contacts are provided by residues 38–42 (QLREK) and Asp70. Positions 71 and 90 each coordinate Mg(2+). Ser109 lines the 4-amino-2-methyl-5-(diphosphooxymethyl)pyrimidine pocket. 2-[(2R,5Z)-2-carboxy-4-methylthiazol-5(2H)-ylidene]ethyl phosphate is bound at residue 135 to 137 (TQT). 4-amino-2-methyl-5-(diphosphooxymethyl)pyrimidine is bound at residue Lys138. 2-[(2R,5Z)-2-carboxy-4-methylthiazol-5(2H)-ylidene]ethyl phosphate contacts are provided by residues Gly165 and 185 to 186 (VS).

It belongs to the thiamine-phosphate synthase family. The cofactor is Mg(2+).

The catalysed reaction is 2-[(2R,5Z)-2-carboxy-4-methylthiazol-5(2H)-ylidene]ethyl phosphate + 4-amino-2-methyl-5-(diphosphooxymethyl)pyrimidine + 2 H(+) = thiamine phosphate + CO2 + diphosphate. It catalyses the reaction 2-(2-carboxy-4-methylthiazol-5-yl)ethyl phosphate + 4-amino-2-methyl-5-(diphosphooxymethyl)pyrimidine + 2 H(+) = thiamine phosphate + CO2 + diphosphate. It carries out the reaction 4-methyl-5-(2-phosphooxyethyl)-thiazole + 4-amino-2-methyl-5-(diphosphooxymethyl)pyrimidine + H(+) = thiamine phosphate + diphosphate. Its pathway is cofactor biosynthesis; thiamine diphosphate biosynthesis; thiamine phosphate from 4-amino-2-methyl-5-diphosphomethylpyrimidine and 4-methyl-5-(2-phosphoethyl)-thiazole: step 1/1. In terms of biological role, condenses 4-methyl-5-(beta-hydroxyethyl)thiazole monophosphate (THZ-P) and 2-methyl-4-amino-5-hydroxymethyl pyrimidine pyrophosphate (HMP-PP) to form thiamine monophosphate (TMP). This chain is Thiamine-phosphate synthase, found in Lacticaseibacillus paracasei (strain ATCC 334 / BCRC 17002 / CCUG 31169 / CIP 107868 / KCTC 3260 / NRRL B-441) (Lactobacillus paracasei).